The chain runs to 77 residues: Dermaseptin-B9 (77 aa).

Residues 1 to 22 (MAFLKKSLFLVLFLGLVSLSVC) form the signal peptide. 2 propeptides span residues 23-43 (EEEK…QSEE) and 76-77 (EQ).

It belongs to the frog skin active peptide (FSAP) family. Dermaseptin subfamily. Expressed by the skin glands.

The protein localises to the secreted. Has antimicrobial activity. Exhibits a bactericidal activity towards several species of mollicutes, firmicutes and gracilicutes. This peptide is membranotropic and it efficiently depolarizes the plasma membrane. In Phyllomedusa bicolor (Two-colored leaf frog), this protein is Dermaseptin-B9 (DRG3).